The sequence spans 34 residues: PRRRRQASRPVRRRRRYRRSTAARRRRRVVRRRR.

The disordered stretch occupies residues 1–34 (PRRRRQASRPVRRRRRYRRSTAARRRRRVVRRRR).

In terms of tissue distribution, testis.

It localises to the nucleus. The protein resides in the chromosome. Protamines substitute for histones in the chromatin of sperm during the haploid phase of spermatogenesis. They compact sperm DNA into a highly condensed, stable and inactive complex. The sequence is that of Protamine-Y1/Y2 from Thunnus thynnus (Atlantic bluefin tuna).